The following is a 301-amino-acid chain: Olfactory receptor 10AG1 (301 aa).

Residues 1-16 (MEFVLLGFSDIPNLHW) lie on the Extracellular side of the membrane. A helical transmembrane segment spans residues 17 to 37 (MLFSIFLLMYLMILMCNGIII). The Cytoplasmic segment spans residues 38-45 (LLIKIHPA). Residues 46–66 (LQTPMYFFLSNFSLLEICYVT) form a helical membrane-spanning segment. The Extracellular segment spans residues 67–90 (IIIPRMLMDIWTQKGNISLFACAT). N82 is a glycosylation site (N-linked (GlcNAc...) asparagine). C88 and C180 are joined by a disulfide. Residues 91 to 111 (QMCFFLMLGGTECLLLTVMAY) form a helical membrane-spanning segment. The Cytoplasmic portion of the chain corresponds to 112 to 130 (DRYVAICKPLQYPLVMNHK). The helical transmembrane segment at 131-151 (VCIQLIIASWTITIPVVIGET) threads the bilayer. At 152 to 188 (CQIFLLPFCGTNTINHFFCDIPPILKLACGNIFVNEI) the chain is on the extracellular side. A helical transmembrane segment spans residues 189–208 (TVHVVAVVFITVPFLLIVVS). Over 209-228 (YGKIISNILKLSSARGKAKA) the chain is Cytoplasmic. A helical membrane pass occupies residues 229 to 249 (FSTCSSHLIVVILFFGAGTIT). Over 250–262 (YLQPKPHQFQRMG) the chain is Extracellular. A helical membrane pass occupies residues 263-283 (KLISLFYTILIPTLNPIIYTL). The Cytoplasmic portion of the chain corresponds to 284-301 (RNKDIMVALRKLLAKLLT).

This sequence belongs to the G-protein coupled receptor 1 family.

It localises to the cell membrane. Functionally, odorant receptor. This Homo sapiens (Human) protein is Olfactory receptor 10AG1 (OR10AG1).